Consider the following 533-residue polypeptide: Probable DNA ligase (533 aa).

Glu211 is an ATP binding site. Lys213 functions as the N6-AMP-lysine intermediate in the catalytic mechanism. Residues Arg218, Arg233, Glu262, Phe302, Arg374, and Lys380 each contribute to the ATP site. Residues 512–533 (LAGEAAEKGQAEGGGEELEDDG) form a disordered region.

The protein belongs to the ATP-dependent DNA ligase family. Requires Mg(2+) as cofactor.

The catalysed reaction is ATP + (deoxyribonucleotide)n-3'-hydroxyl + 5'-phospho-(deoxyribonucleotide)m = (deoxyribonucleotide)n+m + AMP + diphosphate.. In terms of biological role, DNA ligase that seals nicks in double-stranded DNA during DNA replication, DNA recombination and DNA repair. This is Probable DNA ligase from Sorangium cellulosum (strain So ce56) (Polyangium cellulosum (strain So ce56)).